A 54-amino-acid polypeptide reads, in one-letter code: Ferredoxin (54 aa).

4Fe-4S ferredoxin-type domains lie at 2–25 and 26–54; these read YVIN…IQQG and SIYA…NPED. Residues C8, C11, C14, C18, C35, C38, C41, and C45 each coordinate [4Fe-4S] cluster.

Requires [4Fe-4S] cluster as cofactor.

Its function is as follows. Ferredoxins are iron-sulfur proteins that transfer electrons in a wide variety of metabolic reactions. The chain is Ferredoxin from Peptoniphilus asaccharolyticus (Peptostreptococcus asaccharolyticus).